Here is a 235-residue protein sequence, read N- to C-terminus: Large ribosomal subunit protein uL1 (235 aa).

This sequence belongs to the universal ribosomal protein uL1 family. Part of the 50S ribosomal subunit.

In terms of biological role, binds directly to 23S rRNA. The L1 stalk is quite mobile in the ribosome, and is involved in E site tRNA release. Protein L1 is also a translational repressor protein, it controls the translation of the L11 operon by binding to its mRNA. This is Large ribosomal subunit protein uL1 from Desulfovibrio desulfuricans (strain ATCC 27774 / DSM 6949 / MB).